Here is a 491-residue protein sequence, read N- to C-terminus: Probable malate:quinone oxidoreductase (491 aa).

Belongs to the MQO family. The cofactor is FAD.

The catalysed reaction is (S)-malate + a quinone = a quinol + oxaloacetate. It participates in carbohydrate metabolism; tricarboxylic acid cycle; oxaloacetate from (S)-malate (quinone route): step 1/1. This is Probable malate:quinone oxidoreductase from Actinobacillus pleuropneumoniae serotype 5b (strain L20).